The chain runs to 159 residues: 17 kDa surface antigen (159 aa).

The first 19 residues, Met-1–Ala-19, serve as a signal peptide directing secretion. Cys-20 carries N-palmitoyl cysteine lipidation. Cys-20 carries the S-diacylglycerol cysteine lipid modification.

Belongs to the rickettsiale 17 kDa surface antigen family.

It is found in the cell outer membrane. The polypeptide is 17 kDa surface antigen (omp) (Rickettsia prowazekii (strain Madrid E)).